The sequence spans 441 residues: Ribulose bisphosphate carboxylase large chain (441 aa).

Position 5 is an N6,N6,N6-trimethyllysine (Lys-5). The substrate site is built by Asn-114 and Thr-164. Lys-166 acts as the Proton acceptor in catalysis. Lys-168 contacts substrate. Positions 192, 194, and 195 each coordinate Mg(2+). Lys-192 is modified (N6-carboxylysine). His-285 (proton acceptor) is an active-site residue. Residues Arg-286, His-318, and Ser-370 each contribute to the substrate site.

It belongs to the RuBisCO large chain family. Type I subfamily. As to quaternary structure, heterohexadecamer of 8 large chains and 8 small chains; disulfide-linked. The disulfide link is formed within the large subunit homodimers. It depends on Mg(2+) as a cofactor. Post-translationally, the disulfide bond which can form in the large chain dimeric partners within the hexadecamer appears to be associated with oxidative stress and protein turnover.

It is found in the plastid. The protein localises to the chloroplast. The enzyme catalyses 2 (2R)-3-phosphoglycerate + 2 H(+) = D-ribulose 1,5-bisphosphate + CO2 + H2O. It catalyses the reaction D-ribulose 1,5-bisphosphate + O2 = 2-phosphoglycolate + (2R)-3-phosphoglycerate + 2 H(+). RuBisCO catalyzes two reactions: the carboxylation of D-ribulose 1,5-bisphosphate, the primary event in carbon dioxide fixation, as well as the oxidative fragmentation of the pentose substrate in the photorespiration process. Both reactions occur simultaneously and in competition at the same active site. In Begonia metallica x Begonia sanguinea, this protein is Ribulose bisphosphate carboxylase large chain.